The primary structure comprises 328 residues: Acetyl-coenzyme A carboxylase carboxyl transferase subunit alpha (328 aa).

A CoA carboxyltransferase C-terminal domain is found at 42–296 (SFKEQLSILK…KESLISELHF (255 aa)).

This sequence belongs to the AccA family. Acetyl-CoA carboxylase is a heterohexamer composed of biotin carboxyl carrier protein (accB), biotin carboxylase (accC) and two subunits each of ACCase subunit alpha (accA) and ACCase subunit beta (accD).

The protein resides in the plastid. The protein localises to the chloroplast. It carries out the reaction N(6)-carboxybiotinyl-L-lysyl-[protein] + acetyl-CoA = N(6)-biotinyl-L-lysyl-[protein] + malonyl-CoA. Its pathway is lipid metabolism; malonyl-CoA biosynthesis; malonyl-CoA from acetyl-CoA: step 1/1. In terms of biological role, component of the acetyl coenzyme A carboxylase (ACC) complex. First, biotin carboxylase catalyzes the carboxylation of biotin on its carrier protein (BCCP) and then the CO(2) group is transferred by the carboxyltransferase to acetyl-CoA to form malonyl-CoA. The polypeptide is Acetyl-coenzyme A carboxylase carboxyl transferase subunit alpha (Gracilaria tenuistipitata var. liui (Red alga)).